The sequence spans 153 residues: Superoxide dismutase [Cu-Zn] (153 aa).

Positions 45, 47, and 62 each coordinate Cu cation. An intrachain disulfide couples Cys56 to Cys145. Residues His62, His70, His79, and Asp82 each coordinate Zn(2+). His119 contacts Cu cation.

Belongs to the Cu-Zn superoxide dismutase family. Homodimer. Cu cation serves as cofactor. It depends on Zn(2+) as a cofactor.

It localises to the cytoplasm. The enzyme catalyses 2 superoxide + 2 H(+) = H2O2 + O2. Destroys radicals which are normally produced within the cells and which are toxic to biological systems. This Schistosoma mansoni (Blood fluke) protein is Superoxide dismutase [Cu-Zn] (SOD).